Reading from the N-terminus, the 231-residue chain is 2-C-methyl-D-erythritol 4-phosphate cytidylyltransferase (231 aa).

Belongs to the IspD/TarI cytidylyltransferase family. IspD subfamily. Homodimer.

The enzyme catalyses 2-C-methyl-D-erythritol 4-phosphate + CTP + H(+) = 4-CDP-2-C-methyl-D-erythritol + diphosphate. The protein operates within isoprenoid biosynthesis; isopentenyl diphosphate biosynthesis via DXP pathway; isopentenyl diphosphate from 1-deoxy-D-xylulose 5-phosphate: step 2/6. Catalyzes the formation of 4-diphosphocytidyl-2-C-methyl-D-erythritol from CTP and 2-C-methyl-D-erythritol 4-phosphate (MEP). This chain is 2-C-methyl-D-erythritol 4-phosphate cytidylyltransferase, found in Citrobacter koseri (strain ATCC BAA-895 / CDC 4225-83 / SGSC4696).